The primary structure comprises 546 residues: MFS-type transporter patC (546 aa).

A compositionally biased stretch (polar residues) spans Met-1–Gln-15. Residues Met-1–Glu-29 are disordered. Over residues Thr-16–Glu-29 the composition is skewed to basic and acidic residues. 14 consecutive transmembrane segments (helical) span residues Ile-41–Gly-61, Val-89–Phe-109, Trp-113–Pro-133, Val-143–Leu-163, Val-171–Gly-191, Trp-203–Leu-223, Trp-245–Gly-265, Ile-277–Cys-297, Leu-318–Ile-338, Gly-350–Leu-370, Gly-379–Met-399, Ile-416–Val-436, Phe-447–Phe-467, and Val-515–Val-535.

It belongs to the major facilitator superfamily. TCR/Tet family.

It is found in the vacuole membrane. It localises to the cell membrane. Functionally, MFS-type transporter; part of the gene cluster that mediates the biosynthesis of patulin, an acetate-derived tetraketide mycotoxin produced by several fungal species that shows antimicrobial properties against several bacteria. May be involved in the secretion of E-ascladiol to be converted to patulin by the secreted patulin synthase patE. In Penicillium expansum (Blue mold rot fungus), this protein is MFS-type transporter patC.